Consider the following 346-residue polypeptide: Porphobilinogen deaminase (346 aa).

The residue at position 242 (Cys-242) is an S-(dipyrrolylmethanemethyl)cysteine. The tract at residues 317–346 is disordered; that stretch reads ATEPGARSGTGAVRPPETDLSNPSPMENPQ. Residues 335–346 are compositionally biased toward polar residues; sequence DLSNPSPMENPQ.

This sequence belongs to the HMBS family. As to quaternary structure, monomer. Requires dipyrromethane as cofactor.

The enzyme catalyses 4 porphobilinogen + H2O = hydroxymethylbilane + 4 NH4(+). It functions in the pathway porphyrin-containing compound metabolism; protoporphyrin-IX biosynthesis; coproporphyrinogen-III from 5-aminolevulinate: step 2/4. In terms of biological role, tetrapolymerization of the monopyrrole PBG into the hydroxymethylbilane pre-uroporphyrinogen in several discrete steps. This is Porphobilinogen deaminase from Nocardia farcinica (strain IFM 10152).